Reading from the N-terminus, the 92-residue chain is Small ribosomal subunit protein uS19 (92 aa).

This sequence belongs to the universal ribosomal protein uS19 family.

Its function is as follows. Protein S19 forms a complex with S13 that binds strongly to the 16S ribosomal RNA. The polypeptide is Small ribosomal subunit protein uS19 (Bifidobacterium animalis subsp. lactis (strain AD011)).